A 153-amino-acid polypeptide reads, in one-letter code: Movement protein TGB3 (153 aa).

The Cytoplasmic segment spans residues 1–50 (MEAPAITHSSGCVCSDCQWSGSPTVDTKVYLGSGTHANTTKTRETSFLSV). The chain crosses the membrane as a helical span at residues 51-71 (LNDNAWLFVIAALILCLYFII). The Lumenal segment spans residues 72–127 (SKPHVDAVYTEFHQDLNGFSMKLAPGVPIDPKVIAAVKNWQKYPFGTDPRENMVTS). The helical transmembrane segment at 128–148 (IVSGLRHSFCILLLVVVLLVY) threads the bilayer. Over 149-153 (VCHKP) the chain is Cytoplasmic.

It belongs to the virgaviridae TGB3 movement protein family. In terms of assembly, interacts with movement proteins TGB1 and TGB2. TGB1-TGB3-TGB2 complex formation is enhanced by ATP hydrolysis.

The protein resides in the host cell junction. The protein localises to the host plasmodesma. It is found in the host endoplasmic reticulum membrane. It localises to the host cytoplasm. Its subcellular location is the host cytoskeleton. Its function is as follows. Participates in the transport of viral genome to neighboring plant cells directly through plasmodesmata, without any budding. TGBp2 and TGBp3 are necessary for intracellular delivery of TGBp1-containing vRNPs to plasmodesmata. Can gate plasmodesmata and increase their size exclusion limit. Induces host actin cytoskeleton network thickening, which probably plays a major role in virus cell-to-cell movement. This chain is Movement protein TGB3, found in Arachis hypogaea (Peanut).